The following is a 136-amino-acid chain: Antistasin (136 aa).

Positions 1 to 17 (MIKLAILLLFTVAIVRC) are cleaved as a signal peptide. Gln18 is modified (pyrrolidone carboxylic acid). 10 disulfides stabilise this stretch: Cys25-Cys36, Cys30-Cys43, Cys45-Cys65, Cys50-Cys68, Cys54-Cys70, Cys79-Cys90, Cys84-Cys97, Cys99-Cys120, Cys105-Cys123, and Cys109-Cys125. The 26-residue stretch at 45–70 (CSGVRCRMHCPHGFQRSRYGCEFCKC) folds into the Antistasin-like 1 domain. One can recognise an Antistasin-like 2 domain in the interval 100 to 125 (KIDINCRKTCPNGLKRDKLGCEYCEC). Heparin-binding positions include 114-117 (KRDK) and 128-135 (KRKLIPRL).

This sequence belongs to the protease inhibitor I15 (antistasin) family.

The protein localises to the secreted. Functionally, this highly disulfide-bonded protein is a potent inhibitor of factor Xa. May have therapeutic utility as an anticoagulant. Also exhibits a strong metastatic activity. The sequence is that of Antistasin from Haementeria officinalis (Mexican leech).